The chain runs to 335 residues: Mitochondrial uncoupling protein 4C (335 aa).

3 Solcar repeats span residues 34 to 125 (RNLF…FRRP), 137 to 229 (LKIY…SKRT), and 238 to 329 (EGLP…LRQW). 6 helical membrane passes run 40 to 57 (YVNT…VFPL), 100 to 118 (GFSA…RVVL), 138 to 157 (KIYM…QALA), 204 to 223 (GVGP…VGSY), 244 to 264 (FVSS…ADVI), and 304 to 323 (GLMP…WLSV).

Belongs to the mitochondrial carrier (TC 2.A.29) family.

It localises to the mitochondrion inner membrane. Mitochondrial protein that is likely to be responsible for thermogenic respiration. Likely to function in mitochondrial uncoupling i.e. creating mitochondrial proton leaks across the inner mitochondrial membrane and can therefore dissipate the mitochondrial proton gradient and convert the energy of substrate oxidation into heat instead of ATP. Involved in cold tolerance, it is required for development to the adult stage at low temperatures. The chain is Mitochondrial uncoupling protein 4C from Drosophila melanogaster (Fruit fly).